Consider the following 506-residue polypeptide: Histidine ammonia-lyase (506 aa).

Residues 142–144 constitute a cross-link (5-imidazolinone (Ala-Gly)); that stretch reads ASG. Ser143 carries the post-translational modification 2,3-didehydroalanine (Ser).

It belongs to the PAL/histidase family. In terms of processing, contains an active site 4-methylidene-imidazol-5-one (MIO), which is formed autocatalytically by cyclization and dehydration of residues Ala-Ser-Gly.

It localises to the cytoplasm. It carries out the reaction L-histidine = trans-urocanate + NH4(+). It functions in the pathway amino-acid degradation; L-histidine degradation into L-glutamate; N-formimidoyl-L-glutamate from L-histidine: step 1/3. The polypeptide is Histidine ammonia-lyase (Bacillus cereus (strain ATCC 14579 / DSM 31 / CCUG 7414 / JCM 2152 / NBRC 15305 / NCIMB 9373 / NCTC 2599 / NRRL B-3711)).